Consider the following 538-residue polypeptide: Phosphoenolpyruvate carboxykinase (ATP) (538 aa).

The substrate site is built by R61, Y195, and K201. ATP contacts are provided by residues K201, H220, and 236-244; that span reads GLSGTGKTT. Positions 201 and 220 each coordinate Mn(2+). D257 provides a ligand contact to Mn(2+). Positions 285, 323, and 449 each coordinate ATP. R323 is a binding site for substrate.

It belongs to the phosphoenolpyruvate carboxykinase (ATP) family. Mn(2+) serves as cofactor.

Its subcellular location is the cytoplasm. It carries out the reaction oxaloacetate + ATP = phosphoenolpyruvate + ADP + CO2. Its pathway is carbohydrate biosynthesis; gluconeogenesis. Functionally, involved in the gluconeogenesis. Catalyzes the conversion of oxaloacetate (OAA) to phosphoenolpyruvate (PEP) through direct phosphoryl transfer between the nucleoside triphosphate and OAA. The sequence is that of Phosphoenolpyruvate carboxykinase (ATP) from Nitrobacter winogradskyi (strain ATCC 25391 / DSM 10237 / CIP 104748 / NCIMB 11846 / Nb-255).